The primary structure comprises 365 residues: Coxsackievirus and adenovirus receptor homolog (365 aa).

Residues 1–19 (MELLLRFLLLCGVADFTRG) form the signal peptide. 2 consecutive Ig-like C2-type domains span residues 20–136 (LSIT…IQLT) and 141–228 (PSGI…LRLD). Over 20-238 (LSITTPEQMI…VVPPSNRAGT (219 aa)) the chain is Extracellular. 3 cysteine pairs are disulfide-bonded: Cys41/Cys120, Cys146/Cys223, and Cys162/Cys212. Asn106 is a glycosylation site (N-linked (GlcNAc...) asparagine). Residues 239–259 (IAGAVIGTLLALVLIALIVFC) traverse the membrane as a helical segment. Residues Cys259 and Cys260 are each lipidated (S-palmitoyl cysteine). Residues 260–365 (CHKKRREEKY…PAQSKDGSIV (106 aa)) are Cytoplasmic-facing. A compositionally biased stretch (basic and acidic residues) spans 269–282 (YEKEVHHDIREDVP). A disordered region spans residues 269-343 (YEKEVHHDIR…TLPPAKVAAP (75 aa)). Polar residues predominate over residues 286-322 (SRTSTARSYIGSNHSSLGSMSPSNMEGYSKTQYNQVP). 6 positions are modified to phosphoserine: Ser297, Ser304, Ser306, Ser323, Ser332, and Ser363. A PDZ-binding motif is present at residues 360-365 (KDGSIV).

As to quaternary structure, monomer. May form homodimers. Interacts with LNX, MAGI1, DLG4, PRKCABP, TJP1 and CTNNB1. Interacts with MPDZ; recruits MPDZ to intercellular contact sites. Interacts with JAML (homodimeric form). N-glycosylated. Post-translationally, palmitoylated on Cys-259 and/or Cys-260; required for proper localization to the plasma membrane.

The protein localises to the cell membrane. It is found in the basolateral cell membrane. Its subcellular location is the cell junction. The protein resides in the tight junction. It localises to the adherens junction. Its function is as follows. Component of the epithelial apical junction complex that may function as a homophilic cell adhesion molecule and is essential for tight junction integrity. Also involved in transepithelial migration of leukocytes through adhesive interactions with JAML a transmembrane protein of the plasma membrane of leukocytes. The interaction between both receptors also mediates the activation of gamma-delta T-cells, a subpopulation of T-cells residing in epithelia and involved in tissue homeostasis and repair. Upon epithelial CXADR-binding, JAML induces downstream cell signaling events in gamma-delta T-cells through PI3-kinase and MAP kinases. It results in proliferation and production of cytokines and growth factors by T-cells that in turn stimulate epithelial tissues repair. The chain is Coxsackievirus and adenovirus receptor homolog (CXADR) from Bos taurus (Bovine).